A 267-amino-acid chain; its full sequence is MSQNIVIVGASGRMGRVLIEAVLDAPGARLHAAIDRADSGFVGQDAGLFCGRSSGVFISSDFIAALDGADVVIDFTRPEGTLEHMLACVERGVRMVIGTTGFDDEGKAAIRAAAGKIGIVFASNFSVGVNLTFKLLDMAARVLNEGYDVEIIEAHHRFKVDAPSGTALRMGEVIADALGRDLKQCAVYGREGVTGERDPQAIGFATVRGGDVVGDHTALFAALGERVEISHKASSRATFANGAVRAARWLSDKRNGLFDMQDVLGLR.

NAD(+) contacts are provided by residues Gly-9–Met-14 and Asp-35. Arg-36 provides a ligand contact to NADP(+). NAD(+) is bound by residues Gly-98–Thr-100 and Ala-122–Phe-125. His-155 serves as the catalytic Proton donor/acceptor. His-156 serves as a coordination point for (S)-2,3,4,5-tetrahydrodipicolinate. Catalysis depends on Lys-159, which acts as the Proton donor. Residue Gly-165–Thr-166 participates in (S)-2,3,4,5-tetrahydrodipicolinate binding.

This sequence belongs to the DapB family.

It localises to the cytoplasm. The enzyme catalyses (S)-2,3,4,5-tetrahydrodipicolinate + NAD(+) + H2O = (2S,4S)-4-hydroxy-2,3,4,5-tetrahydrodipicolinate + NADH + H(+). It carries out the reaction (S)-2,3,4,5-tetrahydrodipicolinate + NADP(+) + H2O = (2S,4S)-4-hydroxy-2,3,4,5-tetrahydrodipicolinate + NADPH + H(+). It functions in the pathway amino-acid biosynthesis; L-lysine biosynthesis via DAP pathway; (S)-tetrahydrodipicolinate from L-aspartate: step 4/4. Its function is as follows. Catalyzes the conversion of 4-hydroxy-tetrahydrodipicolinate (HTPA) to tetrahydrodipicolinate. This Chromobacterium violaceum (strain ATCC 12472 / DSM 30191 / JCM 1249 / CCUG 213 / NBRC 12614 / NCIMB 9131 / NCTC 9757 / MK) protein is 4-hydroxy-tetrahydrodipicolinate reductase.